The chain runs to 2620 residues: Ubiquitin carboxyl-terminal hydrolase 24 (2620 aa).

The 42-residue stretch at 3–44 folds into the UBA domain; that stretch reads SEEEQHMTTLLCMGFSDPATIRKALRLAKNDINEAVALLTNE. The interval 45 to 102 is disordered; that stretch reads RPGLDYGGYEPMDSGGGPSPGPGGGPRGDGGGDGGGGGPSRGGSTGGGGGFDPPPAYH. Residues 58 to 95 are compositionally biased toward gly residues; it reads SGGGPSPGPGGGPRGDGGGDGGGGGPSRGGSTGGGGGF. Residues S63 and S88 each carry the phosphoserine modification. Y942 is subject to Phosphotyrosine. Disordered stretches follow at residues 1034–1054 and 1129–1151; these read TSGS…SSSS and TLLS…QQHQ. A compositionally biased stretch (low complexity) spans 1131-1151; that stretch reads LSESSSQSSKSPSLSSKQQHQ. S1141 and S1285 each carry phosphoserine. Positions 1689–2042 constitute a USP domain; it reads VGLRNGGATC…NAYMLFYQRV (354 aa). Residue C1698 is the Nucleophile of the active site. The segment at 1921–1945 is disordered; the sequence is ARQDSSSEVGENGRSVDQGGGGSPR. S1943 carries the post-translational modification Phosphoserine. H1970 functions as the Proton acceptor in the catalytic mechanism. Phosphoserine is present on residues S2047, S2077, and S2561. The interval 2063 to 2090 is disordered; that stretch reads AEDLSLSAPSSPEISPQSSPRPHRPNND. The span at 2069-2082 shows a compositional bias: low complexity; it reads SAPSSPEISPQSSP. T2565 carries the phosphothreonine modification. Positions 2575–2620 are disordered; the sequence is EKEQSGSSNGSESSPANENGDRHLQQGSESPMMIGELRSDLDDVDP. Over residues 2579 to 2592 the composition is skewed to low complexity; that stretch reads SGSSNGSESSPANE. S2604 is subject to Phosphoserine. A compositionally biased stretch (basic and acidic residues) spans 2611–2620; it reads LRSDLDDVDP.

Belongs to the peptidase C19 family. As to quaternary structure, (Microbial infection) Interacts with human cytomegalovirus protein UL38.

The enzyme catalyses Thiol-dependent hydrolysis of ester, thioester, amide, peptide and isopeptide bonds formed by the C-terminal Gly of ubiquitin (a 76-residue protein attached to proteins as an intracellular targeting signal).. Ubiquitin-specific protease that regulates cell survival in various contexts through modulating the protein stability of some of its substrates including DDB2, MCL1 or TP53. Plays a positive role on ferritinophagy where ferritin is degraded in lysosomes and releases free iron. This is Ubiquitin carboxyl-terminal hydrolase 24 (USP24) from Homo sapiens (Human).